A 152-amino-acid polypeptide reads, in one-letter code: Transcriptional repressor NrdR (152 aa).

The segment at 3 to 34 (CCYCGHGESKVLETRSAEEGRVIRRRRECMEC) is a zinc-finger region. An ATP-cone domain is found at 49 to 139 (LIVRKKGGSL…VYRQFTDVGR (91 aa)).

This sequence belongs to the NrdR family. Zn(2+) is required as a cofactor.

In terms of biological role, negatively regulates transcription of bacterial ribonucleotide reductase nrd genes and operons by binding to NrdR-boxes. This Heliobacterium modesticaldum (strain ATCC 51547 / Ice1) protein is Transcriptional repressor NrdR.